Reading from the N-terminus, the 176-residue chain is Gamma-crystallin M2 (176 aa).

2 Beta/gamma crystallin 'Greek key' domains span residues 2–40 (GKVI…RVEG) and 41–83 (GCWV…RIIP). The interval 84 to 88 (QYRGS) is connecting peptide. Beta/gamma crystallin 'Greek key' domains are found at residues 89-129 (YRMR…HVMD) and 130-172 (GYWI…RRIM).

It belongs to the beta/gamma-crystallin family. As to quaternary structure, monomer.

Its function is as follows. Crystallins are the dominant structural components of the vertebrate eye lens. In Chiloscyllium indicum (Slender bamboo shark), this protein is Gamma-crystallin M2 (GM2).